Consider the following 87-residue polypeptide: U1-theraphotoxin-Ct1a (87 aa).

The signal sequence occupies residues 1–23 (MKTFTLIAILTCAVLVIFHAAAA). The propeptide occupies 24–48 (EELEVQDVIQPEDTLTGLATLDEDR).

It belongs to the neurotoxin 12 (Hwtx-2) family. 03 (juruin) subfamily. Post-translationally, contains 3 disulfide bonds. Two different connectivities are observed in similar proteins (C1-C3, C2-C5, C4-C6 or C1-C4, C2-C5, C3-C6). In terms of tissue distribution, expressed by the venom gland.

The protein localises to the secreted. In terms of biological role, this toxin causes paralysis and death to sheep blowflies. It may inhibit voltage-gated calcium channels. In Coremiocnemis tropix (Australian tarantula spider), this protein is U1-theraphotoxin-Ct1a.